A 154-amino-acid chain; its full sequence is Myoglobin (154 aa).

One can recognise a Globin domain in the interval 2-148 (GLSEGEWQLV…FRKDIATKYK (147 aa)). Residue S4 is modified to Phosphoserine. H65 is a binding site for nitrite. Position 65 (H65) interacts with O2. Position 68 is a phosphothreonine (T68). A heme b-binding site is contributed by H94.

It belongs to the globin family. Monomeric.

The protein resides in the cytoplasm. The protein localises to the sarcoplasm. The enzyme catalyses Fe(III)-heme b-[protein] + nitric oxide + H2O = Fe(II)-heme b-[protein] + nitrite + 2 H(+). It catalyses the reaction H2O2 + AH2 = A + 2 H2O. Functionally, monomeric heme protein which primary function is to store oxygen and facilitate its diffusion within muscle tissues. Reversibly binds oxygen through a pentacoordinated heme iron and enables its timely and efficient release as needed during periods of heightened demand. Depending on the oxidative conditions of tissues and cells, and in addition to its ability to bind oxygen, it also has a nitrite reductase activity whereby it regulates the production of bioactive nitric oxide. Under stress conditions, like hypoxia and anoxia, it also protects cells against reactive oxygen species thanks to its pseudoperoxidase activity. The protein is Myoglobin (MB) of Phocoenoides dalli dalli (Dall's porpoise).